Reading from the N-terminus, the 229-residue chain is Artemin (229 aa).

The residue at position 1 (alanine 1) is an N-acetylalanine. The region spanning 25–173 is the Ferritin-like diiron domain; sequence HNFDPECEKA…DCLSNLHCIG (149 aa).

The protein belongs to the ferritin family.

The polypeptide is Artemin (Artemia salina (Brine shrimp)).